A 276-amino-acid chain; its full sequence is MALKEYKPMTPGLRGRIDLRKDEITAQKPEKSLTTGKKNRAGRDSRGRISVRGQGGGHKQKYRQIDFKRNKYGIPGTVRTIEYDPNRSANIALIFYADGEKRYIIAPKGLKIGQKIMSGEMATLDVANALPLEAIPVGFTVHNIELTIGRGGQMARSAGAGALVAAKEGEYVTIRLPSGETRLVNKKCYATIGEVGNEDHMNTSLGKAGRSRWLGIRPTVRGMAMNPIDHPLGGGEGRGKGRHPVTPWGQPCKGYKTRKKRNPSDSFIVSRRKKKN.

2 disordered regions span residues 1-61 (MALK…HKQK) and 224-276 (AMNP…KKKN). Over residues 15 to 31 (GRIDLRKDEITAQKPEK) the composition is skewed to basic and acidic residues.

It belongs to the universal ribosomal protein uL2 family. As to quaternary structure, part of the 50S ribosomal subunit. Forms a bridge to the 30S subunit in the 70S ribosome.

In terms of biological role, one of the primary rRNA binding proteins. Required for association of the 30S and 50S subunits to form the 70S ribosome, for tRNA binding and peptide bond formation. It has been suggested to have peptidyltransferase activity; this is somewhat controversial. Makes several contacts with the 16S rRNA in the 70S ribosome. The polypeptide is Large ribosomal subunit protein uL2 (Treponema denticola (strain ATCC 35405 / DSM 14222 / CIP 103919 / JCM 8153 / KCTC 15104)).